The primary structure comprises 322 residues: N-acetyl-gamma-glutamyl-phosphate reductase (322 aa).

The active site involves C132.

Belongs to the NAGSA dehydrogenase family. Type 1 subfamily.

The protein resides in the cytoplasm. It catalyses the reaction N-acetyl-L-glutamate 5-semialdehyde + phosphate + NADP(+) = N-acetyl-L-glutamyl 5-phosphate + NADPH + H(+). It functions in the pathway amino-acid biosynthesis; L-arginine biosynthesis; N(2)-acetyl-L-ornithine from L-glutamate: step 3/4. Functionally, catalyzes the NADPH-dependent reduction of N-acetyl-5-glutamyl phosphate to yield N-acetyl-L-glutamate 5-semialdehyde. The chain is N-acetyl-gamma-glutamyl-phosphate reductase from Bacteroides fragilis (strain YCH46).